The chain runs to 562 residues: NAD-dependent malic enzyme (562 aa).

The active-site Proton donor is Y101. NAD(+) is bound at residue R154. K172 serves as the catalytic Proton acceptor. A divalent metal cation contacts are provided by E243, D244, and D267. D267 and N415 together coordinate NAD(+).

This sequence belongs to the malic enzymes family. In terms of assembly, homotetramer. The cofactor is Mg(2+). Mn(2+) is required as a cofactor.

It catalyses the reaction (S)-malate + NAD(+) = pyruvate + CO2 + NADH. The catalysed reaction is oxaloacetate + H(+) = pyruvate + CO2. This is NAD-dependent malic enzyme from Shewanella baltica (strain OS155 / ATCC BAA-1091).